The primary structure comprises 257 residues: Triosephosphate isomerase (257 aa).

N12 and K14 together coordinate substrate. The active-site Electrophile is the H98. The active-site Proton acceptor is the E169.

Belongs to the triosephosphate isomerase family. As to quaternary structure, homodimer.

It catalyses the reaction D-glyceraldehyde 3-phosphate = dihydroxyacetone phosphate. It participates in carbohydrate biosynthesis; gluconeogenesis. Its pathway is carbohydrate degradation; glycolysis; D-glyceraldehyde 3-phosphate from glycerone phosphate: step 1/1. The protein is Triosephosphate isomerase (tpiA) of Dictyostelium discoideum (Social amoeba).